The chain runs to 114 residues: Superoxide dismutase [Cu-Zn] (114 aa).

Cu cation contacts are provided by H37, H39, and H54. Residues 48 to 76 form a disordered region; it reads CMSSGPHFNPRSKEHGAPTDENRHLGDLG. Zn(2+) contacts are provided by H54, H62, H71, and D74. Over residues 58 to 73 the composition is skewed to basic and acidic residues; it reads RSKEHGAPTDENRHLG. H111 provides a ligand contact to Cu cation.

This sequence belongs to the Cu-Zn superoxide dismutase family. As to quaternary structure, homodimer. Cu cation serves as cofactor. The cofactor is Zn(2+).

The protein localises to the cytoplasm. It catalyses the reaction 2 superoxide + 2 H(+) = H2O2 + O2. Its function is as follows. Destroys radicals which are normally produced within the cells and which are toxic to biological systems. The protein is Superoxide dismutase [Cu-Zn] of Drosophila obscura (Fruit fly).